A 206-amino-acid polypeptide reads, in one-letter code: Probable GTP-binding protein EngB (206 aa).

The 188-residue stretch at 8–195 (RSDEVVLVGR…EDAVNSHFDA (188 aa)) folds into the EngB-type G domain. GTP is bound by residues 16–23 (GRSNVGKS), 41–45 (GVTRQ), 60–63 (DLPG), 140–143 (NKMD), and 175–177 (ITA). The Mg(2+) site is built by serine 23 and threonine 43.

The protein belongs to the TRAFAC class TrmE-Era-EngA-EngB-Septin-like GTPase superfamily. EngB GTPase family. The cofactor is Mg(2+).

Its function is as follows. Necessary for normal cell division and for the maintenance of normal septation. In Halobacterium salinarum (strain ATCC 29341 / DSM 671 / R1), this protein is Probable GTP-binding protein EngB.